Consider the following 524-residue polypeptide: Excitatory amino acid transporter 3 (524 aa).

Over 1-18 (MGKPARKGCEWKRFLKNN) the chain is Cytoplasmic. A helical membrane pass occupies residues 19-38 (WVLLSTVAAVVLGITTGVLV). The Extracellular segment spans residues 39 to 61 (REHSNLSTLEKFYFAFPGEILMR). N43 carries N-linked (GlcNAc...) asparagine glycosylation. The helical transmembrane segment at 62–82 (MLKLIILPLIISSMITGVAAL) threads the bilayer. The Cytoplasmic portion of the chain corresponds to 83–93 (DSNVSGKIGLR). A helical membrane pass occupies residues 94–114 (AVVYYFCTTLIAVILGIVLVV). Na(+)-binding residues include Y98, T101, and T102. Topologically, residues 115–205 (SIKPGVTQKV…KTKEYKIVGM (91 aa)) are extracellular. N-linked (GlcNAc...) asparagine glycans are attached at residues N178 and N195. Residues 206-229 (YSDGINVLGLIVFCLVFGLVIGKM) form a helical membrane-spanning segment. The Cytoplasmic segment spans residues 230–238 (GEKGQILVD). A helical transmembrane segment spans residues 239–266 (FFNALSDATMKIVQIIMCYMPLGILFLI). Residues 267-286 (AGKIIEVEDWEIFRKLGLYM) are Extracellular-facing. The helical transmembrane segment at 287–308 (ATVLTGLAIHSIVILPLIYFIV) threads the bilayer. Over 309–313 (VRKNP) the chain is Cytoplasmic. Positions 314-344 (FRFAMGMAQALLTALMISSSSATLPVTFRCA) form an intramembrane region, discontinuously helical. The L-aspartate site is built by S331 and S333. Residues 345–353 (EENNQVDKR) lie on the Cytoplasmic side of the membrane. The helical transmembrane segment at 354–380 (ITRFVLPVGATINMDGTALYEAVAAVF) threads the bilayer. Na(+) contacts are provided by G362, T364, N366, and D368. Residue T370 coordinates L-aspartate. At 381–393 (IAQLNDLDLGIGQ) the chain is on the extracellular side. Residues 394–427 (IITISITATSASIGAAGVPQAGLVTMVIVLSAVG) constitute an intramembrane region (discontinuously helical). Na(+)-binding residues include S405, I406, and A408. V411 contributes to the L-aspartate binding site. The Extracellular portion of the chain corresponds to 428–440 (LPAEDVTLIIAVD). A helical membrane pass occupies residues 441-462 (WLLDRFRTMVNVLGDAFGTGIV). L-aspartate contacts are provided by R447, T448, and N451. Na(+)-binding residues include N451 and D455. Residues 463 to 524 (EKLSKKELEQ…TISFTQTSQF (62 aa)) lie on the Cytoplasmic side of the membrane. S517 and S522 each carry phosphoserine.

It belongs to the dicarboxylate/amino acid:cation symporter (DAACS) (TC 2.A.23) family. SLC1A1 subfamily. Homotrimer. Interacts with ARL6IP5. Interacts with RTN2 (via N-terminus); the interaction promotes cell surface expression of SLC1A1. Interacts with SORCS2; this interaction is important for normal expression at the cell membrane. Post-translationally, glycosylated. As to expression, expressed in all tissues tested including liver, muscle, testis, ovary, retinoblastoma cell line, neurons and brain (in which there was dense expression in substantia nigra, red nucleus, hippocampus and in cerebral cortical layers).

The protein resides in the cell membrane. It is found in the apical cell membrane. Its subcellular location is the synapse. The protein localises to the synaptosome. It localises to the early endosome membrane. The protein resides in the late endosome membrane. It is found in the recycling endosome membrane. The catalysed reaction is K(+)(in) + L-glutamate(out) + 3 Na(+)(out) + H(+)(out) = K(+)(out) + L-glutamate(in) + 3 Na(+)(in) + H(+)(in). The enzyme catalyses K(+)(in) + L-aspartate(out) + 3 Na(+)(out) + H(+)(out) = K(+)(out) + L-aspartate(in) + 3 Na(+)(in) + H(+)(in). It catalyses the reaction D-aspartate(out) + K(+)(in) + 3 Na(+)(out) + H(+)(out) = D-aspartate(in) + K(+)(out) + 3 Na(+)(in) + H(+)(in). It carries out the reaction K(+)(in) + L-cysteine(out) + 3 Na(+)(out) + H(+)(out) = K(+)(out) + L-cysteine(in) + 3 Na(+)(in) + H(+)(in). Sodium-dependent, high-affinity amino acid transporter that mediates the uptake of L-glutamate and also L-aspartate and D-aspartate. Can also transport L-cysteine. Functions as a symporter that transports one amino acid molecule together with two or three Na(+) ions and one proton, in parallel with the counter-transport of one K(+) ion. Mediates Cl(-) flux that is not coupled to amino acid transport; this avoids the accumulation of negative charges due to aspartate and Na(+) symport. Plays an important role in L-glutamate and L-aspartate reabsorption in renal tubuli. Plays a redundant role in the rapid removal of released glutamate from the synaptic cleft, which is essential for terminating the postsynaptic action of glutamate. Contributes to glutathione biosynthesis and protection against oxidative stress via its role in L-glutamate and L-cysteine transport. Negatively regulated by ARL6IP5. This chain is Excitatory amino acid transporter 3, found in Homo sapiens (Human).